The chain runs to 151 residues: Metallothiol transferase FosB (151 aa).

The region spanning 4–119 (SINHVTYSVS…DGHKFELHTG (116 aa)) is the VOC domain. Positions 7, 66, and 115 each coordinate Mg(2+). Glu-115 (proton donor/acceptor) is an active-site residue.

It belongs to the fosfomycin resistance protein family. FosB subfamily. Homodimer. Mg(2+) serves as cofactor.

The protein localises to the cytoplasm. Metallothiol transferase which confers resistance to fosfomycin by catalyzing the addition of a thiol cofactor to fosfomycin. L-cysteine is probably the physiological thiol donor. In Staphylococcus saprophyticus subsp. saprophyticus (strain ATCC 15305 / DSM 20229 / NCIMB 8711 / NCTC 7292 / S-41), this protein is Metallothiol transferase FosB.